Consider the following 152-residue polypeptide: Ribosome maturation factor RimP (152 aa).

This sequence belongs to the RimP family.

It is found in the cytoplasm. Functionally, required for maturation of 30S ribosomal subunits. The polypeptide is Ribosome maturation factor RimP (Burkholderia cenocepacia (strain ATCC BAA-245 / DSM 16553 / LMG 16656 / NCTC 13227 / J2315 / CF5610) (Burkholderia cepacia (strain J2315))).